Here is a 559-residue protein sequence, read N- to C-terminus: Hepatocyte nuclear factor 1-beta-A (559 aa).

The segment at 1–35 (MFANMVSKLTSLQQELLSALLDSGVTKDVLLQALE) is dimerization. Residues 5 to 36 (MVSKLTSLQQELLSALLDSGVTKDVLLQALED) enclose the HNF-p1 domain. The disordered stretch occupies residues 53 to 98 (MSPSGSKLSDTDSKPVFHTLTNGHSKGKLSGDEGSEDGDDYDTPPI). Over residues 85 to 94 (EGSEDGDDYD) the composition is skewed to acidic residues. Residues 100-195 (KELQSQNTEE…ILRQFNQATQ (96 aa)) form the POU-specific atypical domain. A DNA-binding region (homeobox; HNF1-type) is located at residues 240–320 (LRRNRFKWGP…NRRKEEAFRQ (81 aa)). Low complexity-rich tracts occupy residues 334-354 (LNSL…SPPS) and 370-381 (TSSTTINHHSSN). A disordered region spans residues 334-384 (LNSLLSHSSPHHPQTSSSPPSKMQGVRYSQQGPGEVTSSTTINHHSSNAMS).

Belongs to the HNF1 homeobox family. As to quaternary structure, binds DNA as a dimer. Can form homodimer or heterodimer with HNF1-alpha. As to expression, during embryonic development, expressed dynamically in the developing hindbrain, kidney (pronephros), gut, liver and pancreas; expressed in both intermediate mesoderm (precursor to the kidney) and the caudal hindbrain (including rhombomeres r5 and r6) at 10 hpf with expression diminishing caudally by 14 hpf. Strongly expressed in adult kidney, gut, liver and swim bladder; weakly expressed in brain, eye, testis, ovary and heart.

The protein localises to the nucleus. Its function is as follows. Transcription factor that binds to the inverted palindrome 5'-GTTAATNATTAAC-3'. Required for induction of rhombomere r5/r6 gene expression in the hindbrain. The protein is Hepatocyte nuclear factor 1-beta-A (hnf1ba) of Danio rerio (Zebrafish).